We begin with the raw amino-acid sequence, 491 residues long: tRNA-2-methylthio-N(6)-dimethylallyladenosine synthase (491 aa).

Positions 3-119 (RSYQIRTYGC…LPTLLERARH (117 aa)) constitute an MTTase N-terminal domain. Cys12, Cys48, Cys82, Cys156, Cys160, and Cys163 together coordinate [4Fe-4S] cluster. A Radical SAM core domain is found at 142-372 (RESAYSGWVS…IELQNQISWD (231 aa)). The TRAM domain maps to 375 to 446 (KELVGRSVEL…PHHLVADSEI (72 aa)).

This sequence belongs to the methylthiotransferase family. MiaB subfamily. In terms of assembly, monomer. [4Fe-4S] cluster is required as a cofactor.

It localises to the cytoplasm. The enzyme catalyses N(6)-dimethylallyladenosine(37) in tRNA + (sulfur carrier)-SH + AH2 + 2 S-adenosyl-L-methionine = 2-methylsulfanyl-N(6)-dimethylallyladenosine(37) in tRNA + (sulfur carrier)-H + 5'-deoxyadenosine + L-methionine + A + S-adenosyl-L-homocysteine + 2 H(+). Its function is as follows. Catalyzes the methylthiolation of N6-(dimethylallyl)adenosine (i(6)A), leading to the formation of 2-methylthio-N6-(dimethylallyl)adenosine (ms(2)i(6)A) at position 37 in tRNAs that read codons beginning with uridine. The sequence is that of tRNA-2-methylthio-N(6)-dimethylallyladenosine synthase from Saccharopolyspora erythraea (strain ATCC 11635 / DSM 40517 / JCM 4748 / NBRC 13426 / NCIMB 8594 / NRRL 2338).